The primary structure comprises 290 residues: Porphobilinogen deaminase (290 aa).

At C237 the chain carries S-(dipyrrolylmethanemethyl)cysteine.

This sequence belongs to the HMBS family. Monomer. Dipyrromethane is required as a cofactor.

It catalyses the reaction 4 porphobilinogen + H2O = hydroxymethylbilane + 4 NH4(+). Its pathway is porphyrin-containing compound metabolism; protoporphyrin-IX biosynthesis; coproporphyrinogen-III from 5-aminolevulinate: step 2/4. In terms of biological role, tetrapolymerization of the monopyrrole PBG into the hydroxymethylbilane pre-uroporphyrinogen in several discrete steps. The chain is Porphobilinogen deaminase from Clostridium botulinum (strain Loch Maree / Type A3).